The sequence spans 3013 residues: Protein furry homolog-like (3013 aa).

Serine 2 bears the N-acetylserine mark. Positions aspartate 90–glutamine 109 are disordered. Serine 844 carries the phosphoserine modification. Disordered stretches follow at residues serine 878–threonine 897 and valine 1476–lysine 1498. The span at valine 1476–threonine 1486 shows a compositional bias: low complexity. Residues serine 1914, serine 1935, serine 1941, serine 1945, and serine 1957 each carry the phosphoserine modification. The residue at position 1959 (threonine 1959) is a Phosphothreonine. Residues serine 1978, serine 2272, and serine 2454 each carry the phosphoserine modification. The tract at residues aspartate 2459 to glutamate 2492 is disordered. Residues proline 2464 to glutamine 2483 are compositionally biased toward polar residues. Residue serine 2499 is modified to Phosphoserine. Disordered regions lie at residues leucine 2508 to serine 2567 and glutamate 2636 to threonine 2660. 2 stretches are compositionally biased toward polar residues: residues serine 2528–glutamate 2539 and aspartate 2555–serine 2567.

It belongs to the furry protein family. As to expression, widely expressed with higher expression in colon, placenta, brain and cells of lymphoid origin.

Functionally, plays a key role in maintaining the integrity of polarized cell extensions during morphogenesis, regulates the actin cytoskeleton and plays a key role in patterning sensory neuron dendritic fields by promoting avoidance between homologous dendrites as well as by limiting dendritic branching. May function as a transcriptional activator. This Homo sapiens (Human) protein is Protein furry homolog-like (FRYL).